A 138-amino-acid chain; its full sequence is Transcription antitermination protein NusB (138 aa).

It belongs to the NusB family.

Involved in transcription antitermination. Required for transcription of ribosomal RNA (rRNA) genes. Binds specifically to the boxA antiterminator sequence of the ribosomal RNA (rrn) operons. The protein is Transcription antitermination protein NusB of Serratia proteamaculans (strain 568).